The chain runs to 633 residues: Bifunctional enzyme CysN/CysC (633 aa).

Residues 1 to 463 (MSHQSDLISE…REERAGRFGQ (463 aa)) are sulfate adenylyltransferase. The tr-type G domain maps to 22 to 241 (KELLRFLTCG…TVEIAADRNL (220 aa)). Residues 31–38 (GNVDDGKS) are G1. 31–38 (GNVDDGKS) is a GTP binding site. The interval 89 to 93 (GITID) is G2. Positions 110–113 (DTPG) are G3. GTP contacts are provided by residues 110–114 (DTPGH) and 165–168 (NKMD). Residues 165–168 (NKMD) are G4. Positions 204–206 (SAL) are G5. Positions 464-633 (QPATVLFSGL…LDLLRERQAI (170 aa)) are adenylyl-sulfate kinase. 472–479 (GLSGAGKS) contributes to the ATP binding site.

It in the C-terminal section; belongs to the APS kinase family. The protein in the N-terminal section; belongs to the TRAFAC class translation factor GTPase superfamily. Classic translation factor GTPase family. CysN/NodQ subfamily. Heterodimer composed of CysD, the smaller subunit, and CysNC.

The enzyme catalyses sulfate + ATP + H(+) = adenosine 5'-phosphosulfate + diphosphate. It catalyses the reaction adenosine 5'-phosphosulfate + ATP = 3'-phosphoadenylyl sulfate + ADP + H(+). It participates in sulfur metabolism; hydrogen sulfide biosynthesis; sulfite from sulfate: step 1/3. It functions in the pathway sulfur metabolism; hydrogen sulfide biosynthesis; sulfite from sulfate: step 2/3. With CysD forms the ATP sulfurylase (ATPS) that catalyzes the adenylation of sulfate producing adenosine 5'-phosphosulfate (APS) and diphosphate, the first enzymatic step in sulfur assimilation pathway. APS synthesis involves the formation of a high-energy phosphoric-sulfuric acid anhydride bond driven by GTP hydrolysis by CysN coupled to ATP hydrolysis by CysD. Its function is as follows. APS kinase catalyzes the synthesis of activated sulfate. The protein is Bifunctional enzyme CysN/CysC (cysNC) of Pseudomonas aeruginosa (strain ATCC 15692 / DSM 22644 / CIP 104116 / JCM 14847 / LMG 12228 / 1C / PRS 101 / PAO1).